A 101-amino-acid polypeptide reads, in one-letter code: MLTLTHFLVLAAILFAISVLGIFLNRKNLIILLMAIELMLLAVNFNFIAFSHYLSDSAGQIFVFFILTVAAAESAIGLAILVVLFRNLQSINVEDLGSLKG.

A run of 3 helical transmembrane segments spans residues 4-24, 30-50, and 61-81; these read LTHF…GIFL, IILL…FIAF, and IFVF…LAIL.

This sequence belongs to the complex I subunit 4L family. NDH-1 is composed of 14 different subunits. Subunits NuoA, H, J, K, L, M, N constitute the membrane sector of the complex.

It is found in the cell inner membrane. The catalysed reaction is a quinone + NADH + 5 H(+)(in) = a quinol + NAD(+) + 4 H(+)(out). Functionally, NDH-1 shuttles electrons from NADH, via FMN and iron-sulfur (Fe-S) centers, to quinones in the respiratory chain. The immediate electron acceptor for the enzyme in this species is believed to be ubiquinone. Couples the redox reaction to proton translocation (for every two electrons transferred, four hydrogen ions are translocated across the cytoplasmic membrane), and thus conserves the redox energy in a proton gradient. The polypeptide is NADH-quinone oxidoreductase subunit K (Chromobacterium violaceum (strain ATCC 12472 / DSM 30191 / JCM 1249 / CCUG 213 / NBRC 12614 / NCIMB 9131 / NCTC 9757 / MK)).